Here is a 465-residue protein sequence, read N- to C-terminus: Cysteine--tRNA ligase (465 aa).

Zn(2+) is bound at residue cysteine 27. A 'HIGH' region motif is present at residues 29 to 39; the sequence is PTVYDDAHLGH. The Zn(2+) site is built by cysteine 207, histidine 237, and glutamate 241. The 'KMSKS' region signature appears at 269 to 273; it reads KMSKS. Lysine 272 serves as a coordination point for ATP.

Belongs to the class-I aminoacyl-tRNA synthetase family. In terms of assembly, monomer. Requires Zn(2+) as cofactor.

The protein resides in the cytoplasm. It carries out the reaction tRNA(Cys) + L-cysteine + ATP = L-cysteinyl-tRNA(Cys) + AMP + diphosphate. The protein is Cysteine--tRNA ligase of Helicobacter pylori (strain HPAG1).